Here is a 266-residue protein sequence, read N- to C-terminus: Orotidine 5'-phosphate decarboxylase (266 aa).

Substrate-binding positions include Asp-38, 60–62 (KTH), 92–101 (DRKFADIGNT), Tyr-218, and Arg-236. Lys-94 functions as the Proton donor in the catalytic mechanism.

It belongs to the OMP decarboxylase family.

It catalyses the reaction orotidine 5'-phosphate + H(+) = UMP + CO2. Its pathway is pyrimidine metabolism; UMP biosynthesis via de novo pathway; UMP from orotate: step 2/2. The sequence is that of Orotidine 5'-phosphate decarboxylase (URA3) from Candida maltosa (Yeast).